The following is a 452-amino-acid chain: Methionine aminopeptidase 2 (452 aa).

Residues 1–91 (MTGVTGTEDT…KNKKKKKKKI (91 aa)) are disordered. Residues 8–38 (EDTKVIESKINELNIDKSKPEKTNKVNKSDD) show a composition bias toward basic and acidic residues. Residues 39-62 (VDNDDVDNDDNDDEDNDDDDDEIT) show a composition bias toward acidic residues. Basic residues predominate over residues 74 to 91 (KKKKKNKNKNKKKKKKKI). Histidine 203 lines the substrate pocket. Residues aspartate 223, aspartate 234, and histidine 305 each contribute to the a divalent metal cation site. Histidine 313 is a binding site for substrate. A divalent metal cation is bound by residues glutamate 338 and glutamate 433.

Belongs to the peptidase M24A family. Methionine aminopeptidase eukaryotic type 2 subfamily. Requires Co(2+) as cofactor. It depends on Zn(2+) as a cofactor. Mn(2+) is required as a cofactor. The cofactor is Fe(2+).

It is found in the cytoplasm. It carries out the reaction Release of N-terminal amino acids, preferentially methionine, from peptides and arylamides.. Cotranslationally removes the N-terminal methionine from nascent proteins. The N-terminal methionine is often cleaved when the second residue in the primary sequence is small and uncharged (Met-Ala-, Cys, Gly, Pro, Ser, Thr, or Val). This is Methionine aminopeptidase 2 from Candida dubliniensis (strain CD36 / ATCC MYA-646 / CBS 7987 / NCPF 3949 / NRRL Y-17841) (Yeast).